We begin with the raw amino-acid sequence, 236 residues long: uncharacterized protein (236 aa).

The tract at residues 1–73 is disordered; sequence MEPGGSENAA…GGGWGWGNTQ (73 aa).

This is an uncharacterized protein from Homo sapiens (Human).